A 532-amino-acid chain; its full sequence is Probable calcium-binding mitochondrial carrier CBG00135 (532 aa).

4 EF-hand domains span residues 70–105, 107–136, 137–172, and 173–208; these read EKEK…QTPH, PATM…NYVI, AHEA…MGVN, and LDDH…YPST. Residues D83, D85, D87, S89, and D94 each coordinate Ca(2+). Ca(2+) contacts are provided by D150, N152, D154, E156, and E161. Solcar repeat units follow at residues 243–329, 339–425, and 436–526; these read GVWW…IKRW, LTTY…LKSC, and PGVL…VRKQ. The next 6 helical transmembrane spans lie at 249 to 266, 304 to 323, 349 to 362, 400 to 419, 442 to 459, and 501 to 518; these read LVAG…TAPF, GNGI…FMSY, SSAG…IYPM, GYLP…LTVY, LACG…SYPL, and GITP…ISYV.

The protein belongs to the mitochondrial carrier (TC 2.A.29) family.

The protein resides in the mitochondrion inner membrane. Functionally, calcium-dependent mitochondrial solute carrier. This Caenorhabditis briggsae protein is Probable calcium-binding mitochondrial carrier CBG00135.